The chain runs to 879 residues: MHLHLLLILALFRAGCVVAGPSYSLSGSWRVSNGNGSLELPATVPGYVHSALHQHGLIQDPYYRFNDLNYRWISLDNWTYSTEFKIPFNLSEWQKVKLIFDGVDTVAEILFNNVTIGKTDNMFTGYSFDITNVVKDVNSLKLQFRSAVQYAECQSKAHTSYRVPPECPPVEQKGECHVNFIRKAQCSFSWDWGPSFPSQGIWKDVRIEAYNIAHLDYLTFLPVYDNASQAWNIEIKASFDVASSKSVGGQVTVAIPQLKTQQTNDIELQQEQRIVKLLVKIRKDVAVETWWPRGHGNQTGYNMTILFALDGGLKIEKAAKVYFRTVQLIEEGIKGSPGLSFYFKINGLPIFLKGSNWIPADSFQDKVTSDRLQLLFQSVVDANMNTLRVWGGGIYEQDEFYALCDELGIMVWQDFMFASALYPTEPGFLASVRKEVTYQVRRLKSHPSIIIWSGNNENEVALSVNWFHVNPRDMKTYIDDYVTLYVKNIRKIVLSEDKSRPFIASSPTNGMKTMEEGWISYDPYSIQYGDIHFYNYADDCWNWKIFPKARLVSEYGYQSWPSFSTLEKVSSQEDWAYNSRFSLHRQHHEDGNHQMLHQVKMHFKLPQGTDPLRTFKDTIYLTQVMQAQCIKTETEFYLRSRSEIVDGKGHTMGALYWQLNDIWQAPSWASLEYGGKWKMLHYFARRFFAPLLPVGFEDEGVFYVYGVSDLHKDHHTQLTVRLHHWSSPKPLCSLVNSSIVVKAGEAVVLFQMPVSELLKRCRGCTRETCVVSFYFSTDKELFSPTNYHFLSSLKDAKGLLEANITVNISQKGNVFVFDLETSAVAPFVWLDVGSIPGRFSDNGFLMIRKKLSVLFYPWKPTSKSELQQAFSVTSLTDTY.

Residues 1–19 form the signal peptide; that stretch reads MHLHLLLILALFRAGCVVA. N-linked (GlcNAc...) asparagine glycans are attached at residues Asn35, Asn77, Asn89, and Asn113. A disulfide bridge connects residues Cys167 and Cys176. 190 to 192 contributes to the substrate binding site; that stretch reads WDW. Residues Asn226, Asn297, and Asn302 are each glycosylated (N-linked (GlcNAc...) asparagine). Asn456 lines the substrate pocket. Glu457 serves as the catalytic Proton donor. Cystine bridges form between Cys540/Cys629, Cys732/Cys761, and Cys764/Cys769. Residue Glu554 is the Nucleophile of the active site. A glycan (N-linked (GlcNAc...) asparagine) is linked at Asn736. 2 N-linked (GlcNAc...) asparagine glycosylation sites follow: Asn803 and Asn807.

Belongs to the glycosyl hydrolase 2 family. Monomer. In terms of tissue distribution, highest level in liver, high levels in lung, testis, skin and spleen, moderate level in thymus. Activity found in plasma, kidney, liver, spleen, pancreas, brain, testis, epididymis, heart, lung and skeletal muscle.

The protein resides in the lysosome. It catalyses the reaction Hydrolysis of terminal, non-reducing beta-D-mannose residues in beta-D-mannosides.. Its pathway is glycan metabolism; N-glycan degradation. Exoglycosidase that cleaves the single beta-linked mannose residue from the non-reducing end of all N-linked glycoprotein oligosaccharides. This is Beta-mannosidase from Mus musculus (Mouse).